The primary structure comprises 234 residues: Dienlactone hydrolase 2 (234 aa).

Active-site residues include Cys143, Asp167, and His199.

Belongs to the dienelactone hydrolase family.

It functions in the pathway xenobiotic degradation. Functionally, dienlactone hydrolase; part of the Fusarium detoxification of benzoxazolinone cluster 2 (FDB2) involved in the degradation of benzoxazolinones produced by the host plant. Maize, wheat, and rye produce the 2 benzoxazinone phytoanticipins 2,4-dihy-droxy-7-methoxy-1,4-benzoxazin-3-one (DIMBOA) and 2,4-dihydroxy-1,4-benzoxazin-3-one (DIBOA) that, due to their inherent instability once released, spontaneously degrade to the more stable corresponding benzoxazolinones, 6-methoxy-2-benzoxazolinone (MBOA) and 2-benzoxazolinone (BOA), respectively. The first step in the detoxification of benzoxazolinones involves the hydrolysis of the cyclic ester bond of benzoxazolinones by the FDB1 cluster gamma-lactamase MBL1 to aminophenols. MBL1 is able to convert BOA into 2-aminophenol (2-AP), as well as MBOA into 5-methoxy-2-aminophenol (2-AMP). The FDB2 cluster N-malonyltransferase FDB2/NAT1 then metabolizes aminophenols via N-malonylation to non-toxic malonamic acids. FDB2/NAT1 converts 2-AP into N-(2-hydroxyphenyl) malonamic acid (HPMA) and 2-AMP into N-(2-hydroxy-4-methoxyphenyl) malonamic acid (HMPMA). The duplicated dienlactone hydrolases DLH1 and DLH2 may provide redundant function for hydrolyzing the lactone moiety in the BOA molecule. The roles of the amidases and other enzymes encoded by the 2 FDB clusters have not been identified so far. This Gibberella moniliformis (strain M3125 / FGSC 7600) (Maize ear and stalk rot fungus) protein is Dienlactone hydrolase 2.